The following is a 318-amino-acid chain: Phosphatidylglycerol--prolipoprotein diacylglyceryl transferase (318 aa).

The next 7 helical transmembrane spans lie at 23-43 (PLTI…GAWL), 59-79 (MDII…YHVI), 98-118 (IWEG…GAAI), 124-146 (GVRL…AMGR), 192-212 (FQPT…LLVF), 219-239 (LGAG…RFIF), and 253-273 (LRVN…VFLI). R146 serves as a coordination point for a 1,2-diacyl-sn-glycero-3-phospho-(1'-sn-glycerol). Residues 293 to 312 (FDTRANGHDPEKHDETDGKG) are compositionally biased toward basic and acidic residues. A disordered region spans residues 293–318 (FDTRANGHDPEKHDETDGKGNRHHVP).

It belongs to the Lgt family.

The protein resides in the cell membrane. The catalysed reaction is L-cysteinyl-[prolipoprotein] + a 1,2-diacyl-sn-glycero-3-phospho-(1'-sn-glycerol) = an S-1,2-diacyl-sn-glyceryl-L-cysteinyl-[prolipoprotein] + sn-glycerol 1-phosphate + H(+). It functions in the pathway protein modification; lipoprotein biosynthesis (diacylglyceryl transfer). Functionally, catalyzes the transfer of the diacylglyceryl group from phosphatidylglycerol to the sulfhydryl group of the N-terminal cysteine of a prolipoprotein, the first step in the formation of mature lipoproteins. The chain is Phosphatidylglycerol--prolipoprotein diacylglyceryl transferase from Paenarthrobacter aurescens (strain TC1).